A 260-amino-acid polypeptide reads, in one-letter code: Cytochrome c oxidase subunit 2 (260 aa).

The Mitochondrial intermembrane portion of the chain corresponds to 1-39 (MKFEWLFLTIAPCDAAEPWQLGFQDAATPMMQGIIDLHH). Residues 40 to 61 (DIFFFLILILVFVSRILVRALW) traverse the membrane as a helical segment. The Mitochondrial matrix segment spans residues 62–76 (HFHYKKNPIPQRIVH). A helical membrane pass occupies residues 77–104 (GTTIEILRTIFPSIIPMFIAIPSFALLY). The Mitochondrial intermembrane segment spans residues 105-260 (SMDEVVVDPA…QLIPQTTGEA (156 aa)). Positions 186, 221, 223, 225, and 229 each coordinate Cu cation. A Mg(2+)-binding site is contributed by Glu-223.

This sequence belongs to the cytochrome c oxidase subunit 2 family. Component of the cytochrome c oxidase (complex IV, CIV), a multisubunit enzyme composed of a catalytic core of 3 subunits and several supernumerary subunits. The complex exists as a monomer or a dimer and forms supercomplexes (SCs) in the inner mitochondrial membrane with ubiquinol-cytochrome c oxidoreductase (cytochrome b-c1 complex, complex III, CIII). Requires Cu cation as cofactor.

The protein resides in the mitochondrion inner membrane. It carries out the reaction 4 Fe(II)-[cytochrome c] + O2 + 8 H(+)(in) = 4 Fe(III)-[cytochrome c] + 2 H2O + 4 H(+)(out). Component of the cytochrome c oxidase, the last enzyme in the mitochondrial electron transport chain which drives oxidative phosphorylation. The respiratory chain contains 3 multisubunit complexes succinate dehydrogenase (complex II, CII), ubiquinol-cytochrome c oxidoreductase (cytochrome b-c1 complex, complex III, CIII) and cytochrome c oxidase (complex IV, CIV), that cooperate to transfer electrons derived from NADH and succinate to molecular oxygen, creating an electrochemical gradient over the inner membrane that drives transmembrane transport and the ATP synthase. Cytochrome c oxidase is the component of the respiratory chain that catalyzes the reduction of oxygen to water. Electrons originating from reduced cytochrome c in the intermembrane space (IMS) are transferred via the dinuclear copper A center (CU(A)) of subunit 2 and heme A of subunit 1 to the active site in subunit 1, a binuclear center (BNC) formed by heme A3 and copper B (CU(B)). The BNC reduces molecular oxygen to 2 water molecules using 4 electrons from cytochrome c in the IMS and 4 protons from the mitochondrial matrix. The chain is Cytochrome c oxidase subunit 2 (COX2) from Glycine max (Soybean).